A 65-amino-acid chain; its full sequence is UPF0291 protein BBR47_33060 (65 aa).

Belongs to the UPF0291 family.

The protein localises to the cytoplasm. The sequence is that of UPF0291 protein BBR47_33060 from Brevibacillus brevis (strain 47 / JCM 6285 / NBRC 100599).